The primary structure comprises 469 residues: Aspartyl/glutamyl-tRNA(Asn/Gln) amidotransferase subunit B (469 aa).

It belongs to the GatB/GatE family. GatB subfamily. Heterotrimer of A, B and C subunits.

The enzyme catalyses L-glutamyl-tRNA(Gln) + L-glutamine + ATP + H2O = L-glutaminyl-tRNA(Gln) + L-glutamate + ADP + phosphate + H(+). The catalysed reaction is L-aspartyl-tRNA(Asn) + L-glutamine + ATP + H2O = L-asparaginyl-tRNA(Asn) + L-glutamate + ADP + phosphate + 2 H(+). Allows the formation of correctly charged Asn-tRNA(Asn) or Gln-tRNA(Gln) through the transamidation of misacylated Asp-tRNA(Asn) or Glu-tRNA(Gln) in organisms which lack either or both of asparaginyl-tRNA or glutaminyl-tRNA synthetases. The reaction takes place in the presence of glutamine and ATP through an activated phospho-Asp-tRNA(Asn) or phospho-Glu-tRNA(Gln). The protein is Aspartyl/glutamyl-tRNA(Asn/Gln) amidotransferase subunit B of Methanococcus maripaludis (strain DSM 14266 / JCM 13030 / NBRC 101832 / S2 / LL).